A 610-amino-acid polypeptide reads, in one-letter code: UvrABC system protein C (610 aa).

One can recognise a GIY-YIG domain in the interval 12 to 91 (TSPGVYLYKN…IKQKKPRFNI (80 aa)). The UVR domain occupies 202–237 (SDLKQSLTARMNKAAEGMQFELAAKYRDLITTVEDL).

This sequence belongs to the UvrC family. Interacts with UvrB in an incision complex.

It localises to the cytoplasm. Functionally, the UvrABC repair system catalyzes the recognition and processing of DNA lesions. UvrC both incises the 5' and 3' sides of the lesion. The N-terminal half is responsible for the 3' incision and the C-terminal half is responsible for the 5' incision. The chain is UvrABC system protein C from Koribacter versatilis (strain Ellin345).